A 326-amino-acid polypeptide reads, in one-letter code: rRNA 2'-O-methyltransferase fibrillarin (326 aa).

The segment at 1 to 84 is disordered; the sequence is MAFQPGSRGG…GGARGGAKGG (84 aa). Residues 7-83 show a composition bias toward gly residues; that stretch reads SRGGRGGARG…RGGARGGAKG (77 aa). Residues Arg8, Arg11, Arg15, Arg19, Arg23, Arg26, Arg32, Arg36, Arg39, Arg45, Arg49, Arg55, Arg59, Arg63, Arg67, Arg71, Arg74, and Arg78 each carry the asymmetric dimethylarginine modification. Residues 180-181, 199-200, 224-225, and 244-247 contribute to the S-adenosyl-L-methionine site; these read TS, EF, DA, and DVAQ.

It belongs to the methyltransferase superfamily. Fibrillarin family. In terms of assembly, component of box C/D small nucleolar ribonucleoprotein (snoRNP) particles that contain SNU13, NOP1, SIK1/NOP56 and NOP58, plus a guide RNA. In terms of processing, by homology to other fibrillarins, some or all of the N-terminal domain arginines are modified to asymmetric dimethylarginine (DMA).

It is found in the nucleus. It localises to the nucleolus. It catalyses the reaction L-glutaminyl-[histone H2A] + S-adenosyl-L-methionine = N(5)-methyl-L-glutaminyl-[histone H2A] + S-adenosyl-L-homocysteine + H(+). S-adenosyl-L-methionine-dependent methyltransferase that has the ability to methylate both RNAs and proteins. Involved in pre-rRNA processing. Utilizes the methyl donor S-adenosyl-L-methionine to catalyze the site-specific 2'-hydroxyl methylation of ribose moieties in pre-ribosomal RNA. Site specificity is provided by a guide RNA that base pairs with the substrate. Methylation occurs at a characteristic distance from the sequence involved in base pairing with the guide RNA. Also acts as a protein methyltransferase by mediating methylation of 'Gln-105' of histone H2A (H2AQ105me), a modification that impairs binding of the FACT complex and is specifically present at 35S ribosomal DNA locus. This Eremothecium gossypii (strain ATCC 10895 / CBS 109.51 / FGSC 9923 / NRRL Y-1056) (Yeast) protein is rRNA 2'-O-methyltransferase fibrillarin (NOP1).